A 322-amino-acid polypeptide reads, in one-letter code: Interferon regulatory factor 1 (322 aa).

The IRF tryptophan pentad repeat DNA-binding region spans 5–113; sequence RMRMRPWLEM…SAVRVYRMLP (109 aa). Lysine 78 carries the post-translational modification N6-acetyllysine. Positions 92–164 are disordered; it reads EEVKDQSRNK…STLPDDHSSY (73 aa). The segment covering 141–157 has biased composition (polar residues); that stretch reads GESSPDTFSDGLSSSTL. Residues lysine 276 and lysine 296 each participate in a glycyl lysine isopeptide (Lys-Gly) (interchain with G-Cter in SUMO) cross-link.

It belongs to the IRF family. In terms of assembly, monomer. Homodimer. Interacts with EP300. Interacts with MYD88. Interacts with PIAS3. Interacts with SPOP. In terms of processing, phosphorylated by CK2 and this positively regulates its activity. Sumoylation represses the transcriptional activity and displays enhanced resistance to protein degradation. Sumoylated by UBE2I/UBC9 and SUMO1. Inactivates the tumor suppressor activity. Elevated levels in tumor cells. Major site is Lys-276. Sumoylation is enhanced by PIAS3. Desumoylated by SENP1 in tumor cells and appears to compete with ubiquitination on C-terminal sites. Post-translationally, ubiquitinated in a SPOP-depedent manner. Appears to compete with sumoylation on C-terminal sites.

It is found in the nucleus. Its subcellular location is the cytoplasm. Its activity is regulated as follows. Activated by MYD88. Functionally, transcriptional regulator which displays a remarkable functional diversity in the regulation of cellular responses. Regulates transcription of IFN and IFN-inducible genes, host response to viral and bacterial infections, regulation of many genes expressed during hematopoiesis, inflammation, immune responses and cell proliferation and differentiation, regulation of the cell cycle and induction of growth arrest and programmed cell death following DNA damage. Stimulates both innate and acquired immune responses through the activation of specific target genes and can act as a transcriptional activator and repressor regulating target genes by binding to an interferon-stimulated response element (ISRE) in their promoters. Has an essentail role in IFNG-dependent immunity to mycobacteria. Binds to a consensus sequence in gene promoters. Its target genes for transcriptional activation activity include: genes involved in anti-viral response, such as IFN-alpha/beta, RIGI, TNFSF10/TRAIL, ZBP1, OAS1/2, PIAS1/GBP, EIF2AK2/PKR and RSAD2/viperin; antibacterial response, such as GBP2, GBP5 and NOS2/INOS; anti-proliferative response, such as p53/TP53, LOX and CDKN1A; apoptosis, such as BBC3/PUMA, CASP1, CASP7 and CASP8; immune response, such as IL7, IL12A/B and IL15, PTGS2/COX2 and CYBB; DNA damage responses and DNA repair, such as POLQ/POLH; MHC class I expression, such as TAP1, PSMB9/LMP2, PSME1/PA28A, PSME2/PA28B and B2M and MHC class II expression, such as CIITA; metabolic enzymes, such as ACOD1/IRG1. Represses genes involved in anti-proliferative response, such as BIRC5/survivin, CCNB1, CCNE1, CDK1, CDK2 and CDK4 and in immune response, such as FOXP3, IL4, ANXA2 and TLR4. Stimulates p53/TP53-dependent transcription through enhanced recruitment of EP300 leading to increased acetylation of p53/TP53. Plays an important role in immune response directly affecting NK maturation and activity, macrophage production of IL12, Th1 development and maturation of CD8+ T-cells. Also implicated in the differentiation and maturation of dendritic cells and in the suppression of regulatory T (Treg) cells development. Acts as a tumor suppressor and plays a role not only in antagonism of tumor cell growth but also in stimulating an immune response against tumor cells. The chain is Interferon regulatory factor 1 (IRF1) from Sus scrofa (Pig).